Here is a 638-residue protein sequence, read N- to C-terminus: 1-deoxy-D-xylulose-5-phosphate synthase (638 aa).

Thiamine diphosphate-binding positions include His-79 and 120-122 (AHS). Asp-151 contributes to the Mg(2+) binding site. Residues 152 to 153 (GA), Asn-180, Tyr-289, and Glu-371 each bind thiamine diphosphate. Position 180 (Asn-180) interacts with Mg(2+).

Belongs to the transketolase family. DXPS subfamily. As to quaternary structure, homodimer. The cofactor is Mg(2+). It depends on thiamine diphosphate as a cofactor.

The catalysed reaction is D-glyceraldehyde 3-phosphate + pyruvate + H(+) = 1-deoxy-D-xylulose 5-phosphate + CO2. The protein operates within metabolic intermediate biosynthesis; 1-deoxy-D-xylulose 5-phosphate biosynthesis; 1-deoxy-D-xylulose 5-phosphate from D-glyceraldehyde 3-phosphate and pyruvate: step 1/1. Catalyzes the acyloin condensation reaction between C atoms 2 and 3 of pyruvate and glyceraldehyde 3-phosphate to yield 1-deoxy-D-xylulose-5-phosphate (DXP). This Rhizobium rhizogenes (strain K84 / ATCC BAA-868) (Agrobacterium radiobacter) protein is 1-deoxy-D-xylulose-5-phosphate synthase.